The following is an 84-amino-acid chain: MKFLFLFLAILLATKIPVISGKRHNLRCMGNSGICRASCKKNEQPYLYCRNYQACCLQSYMRISISGKEENTDWSYEKQWPRLP.

A signal peptide spans 1 to 21 (MKFLFLFLAILLATKIPVISG). 3 cysteine pairs are disulfide-bonded: C28-C55, C35-C49, and C39-C56.

Belongs to the beta-defensin family.

Its subcellular location is the secreted. In terms of biological role, has antibacterial activity. This is Beta-defensin 119 (DEFB119) from Macaca fascicularis (Crab-eating macaque).